A 158-amino-acid chain; its full sequence is UPF0262 protein RSKD131_1985 (158 aa).

It belongs to the UPF0262 family.

The polypeptide is UPF0262 protein RSKD131_1985 (Cereibacter sphaeroides (strain KD131 / KCTC 12085) (Rhodobacter sphaeroides)).